The primary structure comprises 521 residues: GMP synthase [glutamine-hydrolyzing] (521 aa).

The 195-residue stretch at Ser10 to Asp204 folds into the Glutamine amidotransferase type-1 domain. Cys87 serves as the catalytic Nucleophile. Active-site residues include His178 and Glu180. One can recognise a GMPS ATP-PPase domain in the interval Trp205–Arg396. Ser232–Ser238 provides a ligand contact to ATP.

In terms of assembly, homodimer.

The catalysed reaction is XMP + L-glutamine + ATP + H2O = GMP + L-glutamate + AMP + diphosphate + 2 H(+). The protein operates within purine metabolism; GMP biosynthesis; GMP from XMP (L-Gln route): step 1/1. In terms of biological role, catalyzes the synthesis of GMP from XMP. This chain is GMP synthase [glutamine-hydrolyzing], found in Wolinella succinogenes (strain ATCC 29543 / DSM 1740 / CCUG 13145 / JCM 31913 / LMG 7466 / NCTC 11488 / FDC 602W) (Vibrio succinogenes).